The sequence spans 213 residues: Ribosomal RNA small subunit methyltransferase G (213 aa).

S-adenosyl-L-methionine contacts are provided by residues Gly-75, Phe-80, 128–129 (IE), and Arg-144.

Belongs to the methyltransferase superfamily. RNA methyltransferase RsmG family.

Its subcellular location is the cytoplasm. It carries out the reaction guanosine(527) in 16S rRNA + S-adenosyl-L-methionine = N(7)-methylguanosine(527) in 16S rRNA + S-adenosyl-L-homocysteine. In terms of biological role, specifically methylates the N7 position of guanine in position 527 of 16S rRNA. The polypeptide is Ribosomal RNA small subunit methyltransferase G (Brucella ovis (strain ATCC 25840 / 63/290 / NCTC 10512)).